A 167-amino-acid chain; its full sequence is Leukotoxin-activating lysine-acyltransferase LktC serotype A11 (167 aa).

Residues His22 and Asp91 contribute to the active site.

This sequence belongs to the RTX toxin acyltransferase family.

It is found in the cytoplasm. It catalyses the reaction a fatty acyl-[ACP] + L-lysyl-[protein] = N(6)-(fatty acyl)-L-lysyl-[protein] + holo-[ACP] + H(+). Involved in fatty acylation of the protoxin (LktA) at two internal lysine residues, thereby converting it to the active toxin. The chain is Leukotoxin-activating lysine-acyltransferase LktC serotype A11 (lktC) from Mannheimia haemolytica (Pasteurella haemolytica).